Reading from the N-terminus, the 488-residue chain is Rhamnulokinase (488 aa).

13 to 17 provides a ligand contact to ATP; sequence ASSGR. Residues Cys-68 and Cys-222 are joined by a disulfide bond. Substrate contacts are provided by residues Gly-83 and 236–238; that span reads HDT. The active-site Proton acceptor is the Asp-237. Thr-259 serves as a coordination point for ATP. Asn-296 is a binding site for substrate. Gln-304 is a binding site for ATP. A disulfide bridge links Cys-353 with Cys-370. Gly-402 lines the ATP pocket. Cys-413 and Cys-417 form a disulfide bridge.

This sequence belongs to the rhamnulokinase family. Requires Mg(2+) as cofactor.

The enzyme catalyses L-rhamnulose + ATP = L-rhamnulose 1-phosphate + ADP + H(+). Its pathway is carbohydrate degradation; L-rhamnose degradation; glycerone phosphate from L-rhamnose: step 2/3. In terms of biological role, involved in the catabolism of L-rhamnose (6-deoxy-L-mannose). Catalyzes the transfer of the gamma-phosphate group from ATP to the 1-hydroxyl group of L-rhamnulose to yield L-rhamnulose 1-phosphate. This chain is Rhamnulokinase, found in Klebsiella pneumoniae subsp. pneumoniae (strain ATCC 700721 / MGH 78578).